The primary structure comprises 69 residues: Small integral membrane protein 20 (69 aa).

Over 1 to 8 (MAAARNLR) the chain is Mitochondrial matrix. Residues 9-29 (TALIFGGFISMVGAAFYPIYF) form a helical membrane-spanning segment. Residues 30 to 69 (RPLMRLEEYQKEQAVNRAGIVQEDVQPPGLKVWSDPFGRK) are Mitochondrial intermembrane-facing. Position 66 is a phenylalanine amide (Phe66).

In terms of assembly, component of the MITRAC (mitochondrial translation regulation assembly intermediate of cytochrome c oxidase complex) complex, the core components of this complex being COA3/MITRAC12 and COX14. Interacts with COA3/MITRAC12 and COX4I1. Directly interacts with newly synthesized MT-CO1/COX1. Highly expressed in the hypothalamus, the spinal cord, and sensory ganglia (at protein level). Also expressed on in the epidermis and dermis layers of the skin (at protein level). Expressed in preadipocytes and adipocytes (at protein level). Expressed in the ovary, specifically in granulosa cells of follicles that have passed the primary stage and in oocytes (at protein level).

It is found in the mitochondrion inner membrane. The protein resides in the secreted. Functionally, component of the MITRAC (mitochondrial translation regulation assembly intermediate of cytochrome c oxidase complex) complex, that regulates cytochrome c oxidase assembly. Promotes the progression of complex assembly after the association of MT-CO1/COX1 with COX4I1 and COX6C. Chaperone-like assembly factor required to stabilize newly synthesized MT-CO1/COX1 and to prevent its premature turnover. Its function is as follows. Peptide involved in a broad spectrum of regulatory functions. Is a ligand for GPR173. As part of the reproductive cycle, it regulates gonadotropin-releasing hormone (GnRH) signaling in the hypothalamus and pituitary gland which augments the release of luteinizing hormone. More specifically, it regulates the expression of transcription factors CEBPB and POU2F1/OCT1 through the cAMP-PKA signaling pathway, which subsequently regulate the expression of GNRHR and KISS1. Plays a protective role in memory retention through activation of GNRHR. Regulates the secretion of AVP by hypothalamic neurons. Plays a role in the transduction of the itch sensation. Induces anxiolytic effects, reducing behavior associated with anxiety. Regulates food intake as well as satiation and satiety by increasing Nucb2 expression in neurons. In the ovary, it regulates follicular growth by stimulating granulosa cell proliferation by increasing the expression of GPR173, CREB1, CYP19A1, KITLG, FSHR, and LHCGR. It also increases the production of estradiol (E2). In the heart, it regulates contractility and relaxation by activating the AKT1-NOS3 and MAPK1-MAPK3 signaling pathways. It also plays a cardioprotective role during ischemia, where it activates the SAFE and RISK pathways. Stimulates the proliferation and differentiation of preadipocytes. In pancreatic islet cells, it induces proliferation of islet cells as well as the production of INS through activation of the MAPK1-MAPK3 signaling pathways. The chain is Small integral membrane protein 20 from Mus musculus (Mouse).